Here is an 856-residue protein sequence, read N- to C-terminus: Valine--tRNA ligase (856 aa).

The 'HIGH' region motif lies at 47–57 (PTASGVLHIGH). Residues 578-582 (KMSKS) carry the 'KMSKS' region motif. Position 581 (lysine 581) interacts with ATP.

Belongs to the class-I aminoacyl-tRNA synthetase family. ValS type 2 subfamily. In terms of assembly, monomer.

Its subcellular location is the cytoplasm. The catalysed reaction is tRNA(Val) + L-valine + ATP = L-valyl-tRNA(Val) + AMP + diphosphate. Functionally, catalyzes the attachment of valine to tRNA(Val). As ValRS can inadvertently accommodate and process structurally similar amino acids such as threonine, to avoid such errors, it has a 'posttransfer' editing activity that hydrolyzes mischarged Thr-tRNA(Val) in a tRNA-dependent manner. The chain is Valine--tRNA ligase from Tropheryma whipplei (strain Twist) (Whipple's bacillus).